A 106-amino-acid chain; its full sequence is MKVLVVVALLVTLISYSSSEGIDDLEADELLSLMANEQTRKECIPKHHECTSNKHGCCRGHLFKYKCQCTTVVTQSGEETEGCFCGTPPHHKAAELVVGFGKKIFG.

Positions 1–19 (MKVLVVVALLVTLISYSSS) are cleaved as a signal peptide. A propeptide spanning residues 20–40 (EGIDDLEADELLSLMANEQTR) is cleaved from the precursor. 4 cysteine pairs are disulfide-bonded: cysteine 43–cysteine 58, cysteine 50–cysteine 67, cysteine 57–cysteine 85, and cysteine 69–cysteine 83.

The protein belongs to the neurotoxin 19 (CSTX) family. 03 subfamily. As to expression, expressed by the venom gland.

It localises to the secreted. In Lycosa singoriensis (Wolf spider), this protein is U1-lycotoxin-Ls1z.